A 538-amino-acid polypeptide reads, in one-letter code: Calcium-dependent protein kinase 3 (538 aa).

The segment at 23–70 is disordered; the sequence is PKKSIERIKKKKDSNKSIKSQHKFEGSKISNKNNELKDVKSKDPKNYE. Residues 56 to 68 show a composition bias toward basic and acidic residues; it reads NELKDVKSKDPKN. The Protein kinase domain maps to 112–367; that stretch reads NLSEEPLGKG…ASEALKHPWF (256 aa). Residues 118–126 and K141 contribute to the ATP site; that span reads LGKGTYGCV. The active-site Proton acceptor is the D232. The J domain autoinhibitory motif signature appears at 387 to 395; the sequence is NFKNYALLL. A j domain region spans residues 387–422; that stretch reads NFKNYALLLKLQKLAMTIIAQQSNDYDLQQLKAVFL. Positions 396–405 match the J domain EF-hand interaction motif motif; it reads KLQKLAMTII. 3 EF-hand domains span residues 412–447, 450–481, and 482–517; these read YDLQ…SGLK, QNFD…DRKH, and LSKK…VILF. Ca(2+)-binding residues include D460, D462, S464, R466, E471, D495, D497, D499, E501, and E506.

This sequence belongs to the protein kinase superfamily. Ser/Thr protein kinase family. CDPK subfamily. The cofactor is Mg(2+).

Its subcellular location is the cytoplasm. It catalyses the reaction L-seryl-[protein] + ATP = O-phospho-L-seryl-[protein] + ADP + H(+). It carries out the reaction L-threonyl-[protein] + ATP = O-phospho-L-threonyl-[protein] + ADP + H(+). Its activity is regulated as follows. Activated by calcium. Upon calcium binding to the EF-hand domain 2, the C-terminus of the junction domain (J domain) undergoes a conformational change which results in the dissociation of the pseudo-substrate inhibitory motif from the catalytic domain. This, in turn, may facilitate the autophosphorylation of the activation loop at Thr-273, which leads to the kinase activation. In terms of biological role, calcium-dependent protein kinase which acts as a sensor and effector of intracellular Ca(2+) levels probably in part downstream of cGMP-activated PKG kinase. In the mosquito midgut, regulates the gliding motility of the ookinete which is essential for the ookinete to invade the midgut epithelium. However, another study showed that while required for ookinete invasion of the midgut epithelium, is not required for ookinete gliding motility. This is Calcium-dependent protein kinase 3 from Plasmodium yoelii yoelii.